The primary structure comprises 819 residues: Meiotically up-regulated gene 45 protein (819 aa).

Residues 797 to 817 (AMCLLTLLIGIYLILQVVFIY) form a helical membrane-spanning segment.

Its subcellular location is the membrane. In terms of biological role, has a role in meiosis. This is Meiotically up-regulated gene 45 protein (mug45) from Schizosaccharomyces pombe (strain 972 / ATCC 24843) (Fission yeast).